Consider the following 642-residue polypeptide: Threonine--tRNA ligase (642 aa).

Residues 1-61 (MPVITLPDGS…ENDATLAIIT (61 aa)) enclose the TGS domain. The catalytic stretch occupies residues 243-534 (DHRKIGKQLD…LTEEFAGFFP (292 aa)). Positions 334, 385, and 511 each coordinate Zn(2+).

It belongs to the class-II aminoacyl-tRNA synthetase family. Homodimer. Requires Zn(2+) as cofactor.

Its subcellular location is the cytoplasm. It carries out the reaction tRNA(Thr) + L-threonine + ATP = L-threonyl-tRNA(Thr) + AMP + diphosphate + H(+). Catalyzes the attachment of threonine to tRNA(Thr) in a two-step reaction: L-threonine is first activated by ATP to form Thr-AMP and then transferred to the acceptor end of tRNA(Thr). Also edits incorrectly charged L-seryl-tRNA(Thr). The chain is Threonine--tRNA ligase from Salmonella paratyphi C (strain RKS4594).